Consider the following 204-residue polypeptide: Threonylcarbamoyl-AMP synthase (204 aa).

The 195-residue stretch at 10–204 (ADELDLVANY…KDLLAGHILR (195 aa)) folds into the YrdC-like domain.

Belongs to the SUA5 family. TsaC subfamily.

Its subcellular location is the cytoplasm. The enzyme catalyses L-threonine + hydrogencarbonate + ATP = L-threonylcarbamoyladenylate + diphosphate + H2O. Required for the formation of a threonylcarbamoyl group on adenosine at position 37 (t(6)A37) in tRNAs that read codons beginning with adenine. Catalyzes the conversion of L-threonine, HCO(3)(-)/CO(2) and ATP to give threonylcarbamoyl-AMP (TC-AMP) as the acyladenylate intermediate, with the release of diphosphate. The sequence is that of Threonylcarbamoyl-AMP synthase from Moraxella catarrhalis (strain BBH18).